The chain runs to 478 residues: Kynurenine 3-monooxygenase (478 aa).

FAD-binding positions include V19, 37–40 (YEAR), and A57. R85 and Y99 together coordinate L-kynurenine. FAD contacts are provided by residues R111, L136, T172, D304, and 317–318 (MN). Positions 363 and 398 each coordinate L-kynurenine. The next 2 membrane-spanning stretches (helical) occupy residues 385-404 (FLHA…VAFT) and 425-445 (GLFV…VHHL).

It belongs to the aromatic-ring hydroxylase family. KMO subfamily. FAD is required as a cofactor. As to expression, highest activity in liver and kidney. Low activity in spleen, stomach, intestinal tract, esophagus, heart and lung.

It localises to the mitochondrion outer membrane. The enzyme catalyses L-kynurenine + NADPH + O2 + H(+) = 3-hydroxy-L-kynurenine + NADP(+) + H2O. It functions in the pathway cofactor biosynthesis; NAD(+) biosynthesis; quinolinate from L-kynurenine: step 1/3. Functionally, catalyzes the hydroxylation of L-kynurenine (L-Kyn) to form 3-hydroxy-L-kynurenine (L-3OHKyn). Required for synthesis of quinolinic acid, a neurotoxic NMDA receptor antagonist and potential endogenous inhibitor of NMDA receptor signaling in axonal targeting, synaptogenesis and apoptosis during brain development. Quinolinic acid may also affect NMDA receptor signaling in pancreatic beta cells, osteoblasts, myocardial cells, and the gastrointestinal tract. The chain is Kynurenine 3-monooxygenase from Rattus norvegicus (Rat).